The sequence spans 379 residues: Cytochrome b (379 aa).

4 helical membrane passes run 33 to 53 (FGSL…FLAM), 77 to 98 (WLIR…FIHV), 113 to 133 (WNIG…GYVL), and 178 to 198 (FFAF…VHLL). 2 residues coordinate heme b: His83 and His97. Positions 182 and 196 each coordinate heme b. His201 is an a ubiquinone binding site. 4 helical membrane-spanning segments follow: residues 226–246 (TKDL…ALFF), 288–308 (LGGV…PLLN), 320–340 (VTQV…WIGG), and 347–367 (FTTI…ILIP).

It belongs to the cytochrome b family. In terms of assembly, the cytochrome bc1 complex contains 11 subunits: 3 respiratory subunits (MT-CYB, CYC1 and UQCRFS1), 2 core proteins (UQCRC1 and UQCRC2) and 6 low-molecular weight proteins (UQCRH/QCR6, UQCRB/QCR7, UQCRQ/QCR8, UQCR10/QCR9, UQCR11/QCR10 and a cleavage product of UQCRFS1). This cytochrome bc1 complex then forms a dimer. It depends on heme b as a cofactor.

The protein localises to the mitochondrion inner membrane. Component of the ubiquinol-cytochrome c reductase complex (complex III or cytochrome b-c1 complex) that is part of the mitochondrial respiratory chain. The b-c1 complex mediates electron transfer from ubiquinol to cytochrome c. Contributes to the generation of a proton gradient across the mitochondrial membrane that is then used for ATP synthesis. The sequence is that of Cytochrome b (MT-CYB) from Akodon montensis (Montane grass mouse).